The sequence spans 404 residues: Nicotinate phosphoribosyltransferase (404 aa).

His-225 bears the Phosphohistidine; by autocatalysis mark.

The protein belongs to the NAPRTase family. Transiently phosphorylated on a His residue during the reaction cycle. Phosphorylation strongly increases the affinity for substrates and increases the rate of nicotinate D-ribonucleotide production. Dephosphorylation regenerates the low-affinity form of the enzyme, leading to product release.

It carries out the reaction nicotinate + 5-phospho-alpha-D-ribose 1-diphosphate + ATP + H2O = nicotinate beta-D-ribonucleotide + ADP + phosphate + diphosphate. Its pathway is cofactor biosynthesis; NAD(+) biosynthesis; nicotinate D-ribonucleotide from nicotinate: step 1/1. Functionally, catalyzes the synthesis of beta-nicotinate D-ribonucleotide from nicotinate and 5-phospho-D-ribose 1-phosphate at the expense of ATP. The polypeptide is Nicotinate phosphoribosyltransferase (Acinetobacter baumannii (strain ATCC 17978 / DSM 105126 / CIP 53.77 / LMG 1025 / NCDC KC755 / 5377)).